The sequence spans 366 residues: Erythronate-4-phosphate dehydrogenase (366 aa).

Ser46 and Thr67 together coordinate substrate. NAD(+) contacts are provided by Asp147 and Thr175. Arg208 is an active-site residue. Asp228 is a binding site for NAD(+). Glu233 is an active-site residue. Catalysis depends on His250, which acts as the Proton donor. Position 253 (Gly253) interacts with NAD(+). Substrate is bound at residue Tyr254.

It belongs to the D-isomer specific 2-hydroxyacid dehydrogenase family. PdxB subfamily. Homodimer.

The protein localises to the cytoplasm. The catalysed reaction is 4-phospho-D-erythronate + NAD(+) = (R)-3-hydroxy-2-oxo-4-phosphooxybutanoate + NADH + H(+). The protein operates within cofactor biosynthesis; pyridoxine 5'-phosphate biosynthesis; pyridoxine 5'-phosphate from D-erythrose 4-phosphate: step 2/5. Functionally, catalyzes the oxidation of erythronate-4-phosphate to 3-hydroxy-2-oxo-4-phosphonooxybutanoate. In Coxiella burnetii (strain RSA 331 / Henzerling II), this protein is Erythronate-4-phosphate dehydrogenase.